The chain runs to 91 residues: Non-specific lipid-transfer protein 1 (91 aa).

4 disulfides stabilise this stretch: cysteine 4-cysteine 51, cysteine 14-cysteine 28, cysteine 29-cysteine 74, and cysteine 49-cysteine 88.

As to expression, expressed in seeds (at protein level).

Its function is as follows. Plant non-specific lipid-transfer proteins transfer phospholipids as well as galactolipids across membranes. May play a role in wax or cutin deposition in the cell walls of expanding epidermal cells and certain secretory tissues. Binds to both saturated and unsaturated lipids, with the highest binding efficiency for linoleic acid, followed by linolenic acid. The polypeptide is Non-specific lipid-transfer protein 1 (Foeniculum vulgare (Fennel)).